A 473-amino-acid polypeptide reads, in one-letter code: Photosystem II CP43 reaction center protein (473 aa).

The propeptide occupies 1–14 (MKTLYSLRRFYPVE). Threonine 15 is modified (N-acetylthreonine). Phosphothreonine is present on threonine 15. Helical transmembrane passes span 69-93 (LFEVAHFVPEKPMYEQGLILLPHLA), 134-155 (LLGPETLEESFPFFGYVWKDRN), 178-200 (KALYFGGVYDTWAPGGGDVRKIT), 255-275 (KPFAWARRAFVWSGEAYLSYS), and 291-312 (WFNNTAYPSEFYGPTGPEASQA). Position 367 (glutamate 367) interacts with [CaMn4O5] cluster. A helical membrane pass occupies residues 447–471 (RARAAAAGFEKGIDRDFEPVLSMTP).

The protein belongs to the PsbB/PsbC family. PsbC subfamily. In terms of assembly, PSII is composed of 1 copy each of membrane proteins PsbA, PsbB, PsbC, PsbD, PsbE, PsbF, PsbH, PsbI, PsbJ, PsbK, PsbL, PsbM, PsbT, PsbX, PsbY, PsbZ, Psb30/Ycf12, at least 3 peripheral proteins of the oxygen-evolving complex and a large number of cofactors. It forms dimeric complexes. Binds multiple chlorophylls and provides some of the ligands for the Ca-4Mn-5O cluster of the oxygen-evolving complex. It may also provide a ligand for a Cl- that is required for oxygen evolution. PSII binds additional chlorophylls, carotenoids and specific lipids. is required as a cofactor.

Its subcellular location is the plastid. The protein resides in the chloroplast thylakoid membrane. In terms of biological role, one of the components of the core complex of photosystem II (PSII). It binds chlorophyll and helps catalyze the primary light-induced photochemical processes of PSII. PSII is a light-driven water:plastoquinone oxidoreductase, using light energy to abstract electrons from H(2)O, generating O(2) and a proton gradient subsequently used for ATP formation. The protein is Photosystem II CP43 reaction center protein of Drimys granadensis.